Reading from the N-terminus, the 156-residue chain is Transcriptional repressor NrdR (156 aa).

The segment at 3–34 (CPYCGETEDKVIDSRQGKEADVIRRRRECLSC) is a zinc-finger region. An ATP-cone domain is found at 49–139 (LVIIKKDGRR…VYREFKHVND (91 aa)).

It belongs to the NrdR family. Zn(2+) is required as a cofactor.

Its function is as follows. Negatively regulates transcription of bacterial ribonucleotide reductase nrd genes and operons by binding to NrdR-boxes. The protein is Transcriptional repressor NrdR of Desulfatibacillum aliphaticivorans.